Here is a 189-residue protein sequence, read N- to C-terminus: ATP synthase subunit delta (189 aa).

It belongs to the ATPase delta chain family. In terms of assembly, F-type ATPases have 2 components, F(1) - the catalytic core - and F(0) - the membrane proton channel. F(1) has five subunits: alpha(3), beta(3), gamma(1), delta(1), epsilon(1). F(0) has three main subunits: a(1), b(2) and c(10-14). The alpha and beta chains form an alternating ring which encloses part of the gamma chain. F(1) is attached to F(0) by a central stalk formed by the gamma and epsilon chains, while a peripheral stalk is formed by the delta and b chains.

It localises to the cell inner membrane. F(1)F(0) ATP synthase produces ATP from ADP in the presence of a proton or sodium gradient. F-type ATPases consist of two structural domains, F(1) containing the extramembraneous catalytic core and F(0) containing the membrane proton channel, linked together by a central stalk and a peripheral stalk. During catalysis, ATP synthesis in the catalytic domain of F(1) is coupled via a rotary mechanism of the central stalk subunits to proton translocation. Functionally, this protein is part of the stalk that links CF(0) to CF(1). It either transmits conformational changes from CF(0) to CF(1) or is implicated in proton conduction. The protein is ATP synthase subunit delta of Methylorubrum populi (strain ATCC BAA-705 / NCIMB 13946 / BJ001) (Methylobacterium populi).